A 335-amino-acid polypeptide reads, in one-letter code: Acetyl-coenzyme A carboxylase carboxyl transferase subunit alpha (335 aa).

In terms of domain architecture, CoA carboxyltransferase C-terminal spans Gln-40 to Ala-294.

Belongs to the AccA family. Acetyl-CoA carboxylase is a heterohexamer composed of biotin carboxyl carrier protein (AccB), biotin carboxylase (AccC) and two subunits each of ACCase subunit alpha (AccA) and ACCase subunit beta (AccD).

It is found in the cytoplasm. It catalyses the reaction N(6)-carboxybiotinyl-L-lysyl-[protein] + acetyl-CoA = N(6)-biotinyl-L-lysyl-[protein] + malonyl-CoA. It participates in lipid metabolism; malonyl-CoA biosynthesis; malonyl-CoA from acetyl-CoA: step 1/1. Functionally, component of the acetyl coenzyme A carboxylase (ACC) complex. First, biotin carboxylase catalyzes the carboxylation of biotin on its carrier protein (BCCP) and then the CO(2) group is transferred by the carboxyltransferase to acetyl-CoA to form malonyl-CoA. This is Acetyl-coenzyme A carboxylase carboxyl transferase subunit alpha from Prochlorococcus marinus (strain MIT 9215).